The primary structure comprises 395 residues: Acetyl-CoA acetyltransferase (395 aa).

The active-site Acyl-thioester intermediate is Cys-90. CoA contacts are provided by Tyr-185 and Lys-230. Tyr-185 contributes to the K(+) binding site. Residues Ala-246, Ala-247, and Ala-249 each coordinate K(+). Ser-250 is a binding site for CoA. Val-347 is a K(+) binding site. Catalysis depends on proton acceptor residues His-351 and Cys-381.

Belongs to the thiolase-like superfamily. Thiolase family. As to quaternary structure, homotetramer.

It is found in the cytoplasm. The catalysed reaction is 2 acetyl-CoA = acetoacetyl-CoA + CoA. Its pathway is metabolic intermediate biosynthesis; (R)-mevalonate biosynthesis; (R)-mevalonate from acetyl-CoA: step 1/3. In terms of biological role, acetyl-CoA acetyltransferase; part of the first module of ergosterol biosynthesis pathway that includes the early steps of the pathway, conserved across all eukaryotes, and which results in the formation of mevalonate from acetyl-coenzyme A (acetyl-CoA). Erg10 catalyzes the formation of acetoacetyl-CoA from acetyl-CoA. The first module starts with the action of the cytosolic acetyl-CoA acetyltransferase eg10 that catalyzes the formation of acetoacetyl-CoA. The hydroxymethylglutaryl-CoA synthases erg13 then condenses acetyl-CoA with acetoacetyl-CoA to form HMG-CoA. The rate-limiting step of the early module is the reduction to mevalonate by the 3-hydroxy-3-methylglutaryl-coenzyme A (HMG-CoA) reductases hcs1. This Schizosaccharomyces pombe (strain 972 / ATCC 24843) (Fission yeast) protein is Acetyl-CoA acetyltransferase (erg10).